A 70-amino-acid chain; its full sequence is Small ribosomal subunit protein bS21 (70 aa).

The protein belongs to the bacterial ribosomal protein bS21 family.

The protein is Small ribosomal subunit protein bS21 of Methylobacillus flagellatus (strain ATCC 51484 / DSM 6875 / VKM B-1610 / KT).